Reading from the N-terminus, the 234-residue chain is Uridylate kinase (234 aa).

10 to 11 (GS) contributes to the ATP binding site. Position 44 (G44) interacts with UMP. The ATP site is built by G45 and R49. Residues D66 and 114-120 (ITPGQTT) each bind UMP. ATP contacts are provided by T140, Y146, and D149.

The protein belongs to the UMP kinase family. In terms of assembly, homohexamer.

The protein localises to the cytoplasm. The catalysed reaction is UMP + ATP = UDP + ADP. It functions in the pathway pyrimidine metabolism; CTP biosynthesis via de novo pathway; UDP from UMP (UMPK route): step 1/1. Inhibited by UTP. Its function is as follows. Catalyzes the reversible phosphorylation of UMP to UDP. This chain is Uridylate kinase, found in Methanoregula boonei (strain DSM 21154 / JCM 14090 / 6A8).